Consider the following 381-residue polypeptide: Alkanesulfonate monooxygenase (381 aa).

It belongs to the SsuD family. Homotetramer.

The enzyme catalyses an alkanesulfonate + FMNH2 + O2 = an aldehyde + FMN + sulfite + H2O + 2 H(+). Functionally, catalyzes the desulfonation of aliphatic sulfonates. The sequence is that of Alkanesulfonate monooxygenase from Escherichia coli O157:H7.